The chain runs to 72 residues: Translation initiation factor IF-1 (72 aa).

Positions Met-1–Lys-72 constitute an S1-like domain.

Belongs to the IF-1 family. Component of the 30S ribosomal translation pre-initiation complex which assembles on the 30S ribosome in the order IF-2 and IF-3, IF-1 and N-formylmethionyl-tRNA(fMet); mRNA recruitment can occur at any time during PIC assembly.

It is found in the cytoplasm. Its function is as follows. One of the essential components for the initiation of protein synthesis. Stabilizes the binding of IF-2 and IF-3 on the 30S subunit to which N-formylmethionyl-tRNA(fMet) subsequently binds. Helps modulate mRNA selection, yielding the 30S pre-initiation complex (PIC). Upon addition of the 50S ribosomal subunit IF-1, IF-2 and IF-3 are released leaving the mature 70S translation initiation complex. The polypeptide is Translation initiation factor IF-1 (Pediococcus pentosaceus (strain ATCC 25745 / CCUG 21536 / LMG 10740 / 183-1w)).